A 424-amino-acid chain; its full sequence is Kynureninase (424 aa).

Pyridoxal 5'-phosphate is bound by residues Leu105, Ser106, 133–136, Asp218, His221, and Tyr243; that span reads FPTD. Lys244 carries the N6-(pyridoxal phosphate)lysine modification. Trp274 and Asn302 together coordinate pyridoxal 5'-phosphate.

It belongs to the kynureninase family. As to quaternary structure, homodimer. Pyridoxal 5'-phosphate serves as cofactor.

The enzyme catalyses L-kynurenine + H2O = anthranilate + L-alanine + H(+). The catalysed reaction is 3-hydroxy-L-kynurenine + H2O = 3-hydroxyanthranilate + L-alanine + H(+). Its pathway is amino-acid degradation; L-kynurenine degradation; L-alanine and anthranilate from L-kynurenine: step 1/1. It functions in the pathway cofactor biosynthesis; NAD(+) biosynthesis; quinolinate from L-kynurenine: step 2/3. Functionally, catalyzes the cleavage of L-kynurenine (L-Kyn) and L-3-hydroxykynurenine (L-3OHKyn) into anthranilic acid (AA) and 3-hydroxyanthranilic acid (3-OHAA), respectively. The polypeptide is Kynureninase (Stenotrophomonas maltophilia (strain K279a)).